We begin with the raw amino-acid sequence, 144 residues long: Large ribosomal subunit protein uL15 (144 aa).

Residues 1–57 are disordered; that stretch reads MKLNDLSPAPGSRREKHRPGRGIGSGLGKTGGRGHKGQTSRSGGSIAPGFEGGQQPL. The segment covering 21 to 31 has biased composition (gly residues); that stretch reads RGIGSGLGKTG.

It belongs to the universal ribosomal protein uL15 family. In terms of assembly, part of the 50S ribosomal subunit.

In terms of biological role, binds to the 23S rRNA. The polypeptide is Large ribosomal subunit protein uL15 (Pseudomonas putida (strain ATCC 700007 / DSM 6899 / JCM 31910 / BCRC 17059 / LMG 24140 / F1)).